The sequence spans 327 residues: S-adenosylmethionine/S-adenosylhomocysteine transporter (327 aa).

Helical transmembrane passes span 22–42 (CDMAIFLIFLNAFIWSSSFAL), 53–73 (LFVTGSRMVLAGVVLFGLLLC), 85–105 (IMPIVLLSVIGFYLTNVLEFI), 114–134 (TACFIYGFSPFTAAFCSYVQL), 143–163 (LGGLSLGLVSYLVYLLFGGSE), 165–185 (VAEWGWQLGLPELLLIAATCL), 202–222 (SLSMTAINAYAMVIAGVLSLI), 240–260 (LFLQAIGALVIFSNLICYNLF), 271–291 (FLSFCNLVMPLFASFFGWLLL), and 294–314 (SFPPGLLFAVGFMVLGCRLIY). The EamA 1 domain maps to 34-157 (FIWSSSFALS…LGLVSYLVYL (124 aa)). One can recognise an EamA 2 domain in the interval 189 to 313 (GWTLLRKLGR…GFMVLGCRLI (125 aa)).

This sequence belongs to the drug/metabolite transporter (DMT) superfamily. 10 TMS drug/metabolite exporter (DME) (TC 2.A.7.3) family.

Its subcellular location is the cell membrane. With respect to regulation, CCCP treatment reduces SAM intracellular uptake by 50%. Functionally, transports S-adenosylmethionine (SAM) and S-adenosylhomocysteine (SAH). Allows bacteria to acquire SAM from the eukaryotic host cell and to likely remove the toxic by-product SAH. The protein is S-adenosylmethionine/S-adenosylhomocysteine transporter of Chlamydia trachomatis serovar L2 (strain ATCC VR-902B / DSM 19102 / 434/Bu).